We begin with the raw amino-acid sequence, 2053 residues long: Nonribosomal peptide synthetase pboA (2053 aa).

Residues 16-402 form an adenylation 1 region; that stretch reads ACRDNADRPA…GRRDRVAKVR (387 aa). One can recognise a Carrier 1 domain in the interval 503-579; sequence RSYASVDEVI…HLITVCRERR (77 aa). Ser-540 is subject to O-(pantetheine 4'-phosphoryl)serine. Residues 611–896 form a condensation 1 region; it reads NDPSLYCVKH…LLQSVHRTVQ (286 aa). Positions 1034-1418 are adenylation 2; it reads SAAARNPTNI…GRRDRQVKLR (385 aa). The 79-residue stretch at 1515-1593 folds into the Carrier 2 domain; sequence VPDTSVKKII…DIVALVEGKI (79 aa). Ser-1553 carries the O-(pantetheine 4'-phosphoryl)serine modification. Positions 1630 to 1981 are condensation 2; that stretch reads NSQCQSGFNV…LQLRLEYDSD (352 aa).

Belongs to the NRP synthetase family. The cofactor is pantetheine 4'-phosphate.

It functions in the pathway secondary metabolite biosynthesis. In terms of biological role, nonribosomal peptide synthetase; part of the gene cluster that mediates the biosynthesis of protubonine B, a hydroxylated and diacetylated cyclo-L-Trp-L-Leu derivative. The first step of the protubonine B synthesis is performed by the nonribosomal peptide synthetase pboA that catalyzes the formation of cyclo-L-Trp-L-Leu by condensing L-Leu with L-Trp. The flavin-dependent monooxygenase pboD is responsible for hydroxylation at C-3 of the indole ring and subsequent formation of the pyrrolidine ring, leadind to protubonine D. Protubonine D is further diacetylated by two acetyltransferases, pboB and pboC, to form the final product protubonine B via protubonine C. The chain is Nonribosomal peptide synthetase pboA from Aspergillus ustus.